The chain runs to 234 residues: Sugar fermentation stimulation protein homolog (234 aa).

The protein belongs to the SfsA family.

This Pseudoalteromonas atlantica (strain T6c / ATCC BAA-1087) protein is Sugar fermentation stimulation protein homolog.